The following is a 184-amino-acid chain: Ribosome-recycling factor (184 aa).

The protein belongs to the RRF family.

It is found in the cytoplasm. In terms of biological role, responsible for the release of ribosomes from messenger RNA at the termination of protein biosynthesis. May increase the efficiency of translation by recycling ribosomes from one round of translation to another. The sequence is that of Ribosome-recycling factor from Acinetobacter baumannii (strain SDF).